Here is a 242-residue protein sequence, read N- to C-terminus: Hairy and enhancer of split-related protein HELT (242 aa).

The 56-residue stretch at arginine 10 to leucine 65 folds into the bHLH domain. Lysine 48 is modified (N6-acetyllysine). An Orange domain is found at phenylalanine 87–leucine 122.

This sequence belongs to the HEY family. Self-associates. Interacts with HES5 and HEY2.

Its subcellular location is the nucleus. Transcriptional repressor which binds preferentially to the canonical E box sequence 5'-CACGCG-3'. The chain is Hairy and enhancer of split-related protein HELT (HELT) from Homo sapiens (Human).